A 241-amino-acid polypeptide reads, in one-letter code: 1-(5-phosphoribosyl)-5-[(5-phosphoribosylamino)methylideneamino] imidazole-4-carboxamide isomerase (241 aa).

Asp-8 serves as the catalytic Proton acceptor. Asp-129 functions as the Proton donor in the catalytic mechanism.

It belongs to the HisA/HisF family.

It is found in the cytoplasm. It carries out the reaction 1-(5-phospho-beta-D-ribosyl)-5-[(5-phospho-beta-D-ribosylamino)methylideneamino]imidazole-4-carboxamide = 5-[(5-phospho-1-deoxy-D-ribulos-1-ylimino)methylamino]-1-(5-phospho-beta-D-ribosyl)imidazole-4-carboxamide. It functions in the pathway amino-acid biosynthesis; L-histidine biosynthesis; L-histidine from 5-phospho-alpha-D-ribose 1-diphosphate: step 4/9. The sequence is that of 1-(5-phosphoribosyl)-5-[(5-phosphoribosylamino)methylideneamino] imidazole-4-carboxamide isomerase from Chloroflexus aggregans (strain MD-66 / DSM 9485).